A 351-amino-acid chain; its full sequence is Biotin synthase (351 aa).

A Radical SAM core domain is found at 44–262 (NRVQVSTLLS…LAVARIMMPK (219 aa)). The [4Fe-4S] cluster site is built by C59, C63, and C66. [2Fe-2S] cluster-binding residues include C103, C134, C194, and R266.

The protein belongs to the radical SAM superfamily. Biotin synthase family. As to quaternary structure, homodimer. [4Fe-4S] cluster is required as a cofactor. Requires [2Fe-2S] cluster as cofactor.

It catalyses the reaction (4R,5S)-dethiobiotin + (sulfur carrier)-SH + 2 reduced [2Fe-2S]-[ferredoxin] + 2 S-adenosyl-L-methionine = (sulfur carrier)-H + biotin + 2 5'-deoxyadenosine + 2 L-methionine + 2 oxidized [2Fe-2S]-[ferredoxin]. It functions in the pathway cofactor biosynthesis; biotin biosynthesis; biotin from 7,8-diaminononanoate: step 2/2. Functionally, catalyzes the conversion of dethiobiotin (DTB) to biotin by the insertion of a sulfur atom into dethiobiotin via a radical-based mechanism. The polypeptide is Biotin synthase (Stutzerimonas stutzeri (strain A1501) (Pseudomonas stutzeri)).